We begin with the raw amino-acid sequence, 505 residues long: ATP synthase subunit alpha (505 aa).

170–177 (GDRQTGKT) lines the ATP pocket.

It belongs to the ATPase alpha/beta chains family. In terms of assembly, F-type ATPases have 2 components, CF(1) - the catalytic core - and CF(0) - the membrane proton channel. CF(1) has five subunits: alpha(3), beta(3), gamma(1), delta(1), epsilon(1). CF(0) has four main subunits: a(1), b(1), b'(1) and c(9-12).

The protein resides in the cellular thylakoid membrane. The catalysed reaction is ATP + H2O + 4 H(+)(in) = ADP + phosphate + 5 H(+)(out). Functionally, produces ATP from ADP in the presence of a proton gradient across the membrane. The alpha chain is a regulatory subunit. This Prochlorococcus marinus (strain MIT 9515) protein is ATP synthase subunit alpha.